Consider the following 187-residue polypeptide: Ubiquinone biosynthesis protein COQ4 homolog, mitochondrial (187 aa).

4 residues coordinate Zn(2+): histidine 77, aspartate 78, histidine 81, and glutamate 93.

The protein belongs to the COQ4 family. In terms of assembly, component of a multi-subunit COQ enzyme complex. It depends on Zn(2+) as a cofactor.

It is found in the mitochondrion inner membrane. It carries out the reaction a 4-hydroxy-3-methoxy-5-(all-trans-polyprenyl)benzoate + H(+) = a 2-methoxy-6-(all-trans-polyprenyl)phenol + CO2. It functions in the pathway cofactor biosynthesis; ubiquinone biosynthesis. Its function is as follows. Lyase that catalyzes the C1-decarboxylation of 4-hydroxy-3-methoxy-5-(all-trans-polyprenyl)benzoic acid into 2-methoxy-6-(all-trans-polyprenyl)phenol during ubiquinone biosynthesis. The protein is Ubiquinone biosynthesis protein COQ4 homolog, mitochondrial of Leishmania braziliensis.